A 1178-amino-acid chain; its full sequence is Pyruvate carboxylase, mitochondrial (1178 aa).

The transit peptide at 1-20 directs the protein to the mitochondrion; the sequence is MLKFRTVHGGLRLLGIRRTS. Lys-35 and Lys-39 each carry N6-acetyllysine. The region spanning 36–486 is the Biotin carboxylation domain; that stretch reads PIKKVMVANR…DTQFIDENPE (451 aa). Lys-79 bears the N6-acetyllysine; alternate mark. The residue at position 79 (Lys-79) is an N6-succinyllysine; alternate. Lys-148 and Lys-152 each carry N6-acetyllysine. The ATP site is built by Lys-152 and Glu-236. The ATP-grasp domain occupies 156–353; it reads RAIAIAAGVP…LVHAQIHVAE (198 aa). Lys-241 carries the N6-acetyllysine modification. Residue His-271 participates in ATP binding. Residues Lys-297 and Lys-319 each carry the N6-acetyllysine modification. Residue Arg-328 is part of the active site. An N6-acetyllysine modification is found at Lys-434. Lys-442 bears the N6-succinyllysine mark. The Pyruvate carboxyltransferase domain occupies 563–832; sequence LLLMDTTFRD…DTEVPMERVF (270 aa). A substrate-binding site is contributed by 571-575; that stretch reads RDAHQ. Residue Asp-572 participates in Mn(2+) binding. Lys-589 carries the post-translational modification N6-acetyllysine. Substrate is bound at residue Arg-644. N6-acetyllysine is present on residues Lys-661 and Lys-717. Lys-741 contacts Mn(2+). Lys-741 carries the post-translational modification N6-carboxylysine. Lys-748 bears the N6-acetyllysine mark. Residues His-771 and His-773 each contribute to the Mn(2+) site. Lys-892 bears the N6-acetyllysine mark. Residue Thr-908 coordinates substrate. Lys-969 and Lys-992 each carry N6-acetyllysine. Residue Thr-1003 is modified to Phosphothreonine. 3 positions are modified to N6-acetyllysine: Lys-1061, Lys-1090, and Lys-1124. The Biotinyl-binding domain maps to 1109-1178; it reads KGQIGAPMPG…EGDDLILEIE (70 aa). N6-biotinyllysine is present on Lys-1144.

Homotetramer. Interacts (via the biotin carboxylation domain) with SIRT4. The cofactor is biotin. It depends on Mn(2+) as a cofactor. Acetylation of Lys-748 might play a role in catalytic activity regulation.

It localises to the mitochondrion matrix. It catalyses the reaction hydrogencarbonate + pyruvate + ATP = oxaloacetate + ADP + phosphate + H(+). It functions in the pathway carbohydrate biosynthesis; gluconeogenesis. Its function is as follows. Pyruvate carboxylase catalyzes a 2-step reaction, involving the ATP-dependent carboxylation of the covalently attached biotin in the first step and the transfer of the carboxyl group to pyruvate in the second. Catalyzes in a tissue specific manner, the initial reactions of glucose (liver, kidney) and lipid (adipose tissue, liver, brain) synthesis from pyruvate. The sequence is that of Pyruvate carboxylase, mitochondrial from Homo sapiens (Human).